A 242-amino-acid polypeptide reads, in one-letter code: Myogenic factor 6 (242 aa).

The interval S31 to L63 is disordered. The bHLH domain occupies D93–L144.

As to quaternary structure, efficient DNA binding requires dimerization with another bHLH protein.

The protein resides in the nucleus. In terms of biological role, involved in muscle differentiation (myogenic factor). Induces fibroblasts to differentiate into myoblasts. Probable sequence specific DNA-binding protein. The chain is Myogenic factor 6 (MYF6) from Sus scrofa (Pig).